Consider the following 102-residue polypeptide: Small ribosomal subunit protein uS10 (102 aa).

This sequence belongs to the universal ribosomal protein uS10 family. As to quaternary structure, part of the 30S ribosomal subunit.

Its function is as follows. Involved in the binding of tRNA to the ribosomes. This Pseudothermotoga lettingae (strain ATCC BAA-301 / DSM 14385 / NBRC 107922 / TMO) (Thermotoga lettingae) protein is Small ribosomal subunit protein uS10.